Consider the following 224-residue polypeptide: Small ribosomal subunit protein uS3 (224 aa).

In terms of domain architecture, KH type-2 spans 38-106 (LREFVKEKLG…EVYLNVVEVR (69 aa)).

It belongs to the universal ribosomal protein uS3 family. In terms of assembly, part of the 30S ribosomal subunit. Forms a tight complex with proteins S10 and S14.

Functionally, binds the lower part of the 30S subunit head. Binds mRNA in the 70S ribosome, positioning it for translation. This chain is Small ribosomal subunit protein uS3, found in Anaeromyxobacter dehalogenans (strain 2CP-C).